The sequence spans 666 residues: Vicilin-like antimicrobial peptides 2-1 (666 aa).

The first 27 residues, 1–27 (MAINTSNLCSLLFLLSLFLLSTTVSLA), serve as a signal peptide directing secretion. 2 disordered regions span residues 161-191 (QQKR…DPQQ) and 219-254 (QQRQ…PYYF). 2 consecutive Cupin type-1 domains span residues 271–410 (SVLE…EKLR) and 455–625 (YNLF…KEVE). Residues 629 to 655 (NSQDQSIFFPGPRQHQQQSPRSTKQQQ) are disordered. Low complexity predominate over residues 642–655 (QHQQQSPRSTKQQQ).

This sequence belongs to the 7S seed storage protein family.

It is found in the secreted. Antimicrobial peptides 2b, 2c and 2d have antibacterial and antifungal activity against a range of species. This Macadamia integrifolia (Macadamia nut) protein is Vicilin-like antimicrobial peptides 2-1.